The following is a 297-amino-acid chain: 4-hydroxy-tetrahydrodipicolinate synthase (297 aa).

Threonine 51 serves as a coordination point for pyruvate. The Proton donor/acceptor role is filled by tyrosine 139. Lysine 167 serves as the catalytic Schiff-base intermediate with substrate. Residue valine 209 coordinates pyruvate.

Belongs to the DapA family. Homotetramer; dimer of dimers.

The protein resides in the cytoplasm. It catalyses the reaction L-aspartate 4-semialdehyde + pyruvate = (2S,4S)-4-hydroxy-2,3,4,5-tetrahydrodipicolinate + H2O + H(+). It participates in amino-acid biosynthesis; L-lysine biosynthesis via DAP pathway; (S)-tetrahydrodipicolinate from L-aspartate: step 3/4. Its function is as follows. Catalyzes the condensation of (S)-aspartate-beta-semialdehyde [(S)-ASA] and pyruvate to 4-hydroxy-tetrahydrodipicolinate (HTPA). In Albidiferax ferrireducens (strain ATCC BAA-621 / DSM 15236 / T118) (Rhodoferax ferrireducens), this protein is 4-hydroxy-tetrahydrodipicolinate synthase.